The chain runs to 1399 residues: DNA-directed RNA polymerase subunit beta' (1399 aa).

Zn(2+)-binding residues include Cys70, Cys72, Cys85, and Cys88. Mg(2+) is bound by residues Asp460, Asp462, and Asp464. Residues Cys814, Cys888, Cys895, and Cys898 each contribute to the Zn(2+) site.

It belongs to the RNA polymerase beta' chain family. The RNAP catalytic core consists of 2 alpha, 1 beta, 1 beta' and 1 omega subunit. When a sigma factor is associated with the core the holoenzyme is formed, which can initiate transcription. It depends on Mg(2+) as a cofactor. Zn(2+) serves as cofactor.

It catalyses the reaction RNA(n) + a ribonucleoside 5'-triphosphate = RNA(n+1) + diphosphate. In terms of biological role, DNA-dependent RNA polymerase catalyzes the transcription of DNA into RNA using the four ribonucleoside triphosphates as substrates. In Stutzerimonas stutzeri (strain A1501) (Pseudomonas stutzeri), this protein is DNA-directed RNA polymerase subunit beta'.